The primary structure comprises 540 residues: MAKDLKFSEDARQSMLRGVDKLANAVKVTIGPKGRNVVLDKEYTSPLITNDGVTIAKEIELEDPYENMGAKLVQEVANKTNEIAGDGTTTATVLAQAMIQEGLKNVTSGANPVGLRQGIDKAVEVAIEALHEISQNVDNKNEIAQVGSISAADEEIGKYISEAMEKVGNDGVITIEESSGFNTELEVVEGMQFDRGYQSPYMVTDSDKMVADLERPYILITDKKISSFQDILPLLEQVVQSNRPILIVADDVEGDALTNIVLNRMRGTFTAVAVKAPGFGDRRKAMLEDLAILTGAQVITDDLGLELKEATMDMLGTANKAEITKDNTTVVDGDGDQNSIDARVSQIKAQIEETDSEFDKEKLQERLAKLAGGVAVIKVGAASETELKERKLRIEDALNSTRAAVEEGIVAGGGTAFMNIYEKVAKIEAEGDIATGINIVLKALEAPVRQIAENAGLEGSIIVERLKNADIGVGFNAATNEWVNMLEAGIVDPTKVTRSSLQHAASVAAMFLTTEAVVANIPEESNNDAQAGMGGMPGMM.

ATP contacts are provided by residues 29–32 (TIGP), 86–90 (DGTTT), Gly-413, 476–478 (NAA), and Asp-492.

This sequence belongs to the chaperonin (HSP60) family. Forms a cylinder of 14 subunits composed of two heptameric rings stacked back-to-back. Interacts with the co-chaperonin GroES.

The protein resides in the cytoplasm. It carries out the reaction ATP + H2O + a folded polypeptide = ADP + phosphate + an unfolded polypeptide.. Its function is as follows. Together with its co-chaperonin GroES, plays an essential role in assisting protein folding. The GroEL-GroES system forms a nano-cage that allows encapsulation of the non-native substrate proteins and provides a physical environment optimized to promote and accelerate protein folding. The sequence is that of Chaperonin GroEL from Staphylococcus saprophyticus subsp. saprophyticus (strain ATCC 15305 / DSM 20229 / NCIMB 8711 / NCTC 7292 / S-41).